Reading from the N-terminus, the 182-residue chain is UPF0690 protein C1orf52 (182 aa).

2 disordered regions span residues 1 to 67 (MAAE…RSVT) and 100 to 182 (WKSN…KKKK). Over residues 23–32 (SDEEDNIEPE) the composition is skewed to acidic residues. Residues 50–63 (NKAEKRLPGPDELF) show a composition bias toward basic and acidic residues. At Thr67 the chain carries Phosphothreonine. Residue Tyr132 is modified to Phosphotyrosine. Acidic residues predominate over residues 151–162 (EGEETLESDDEK). Ser158 is modified (phosphoserine). Basic and acidic residues predominate over residues 172 to 182 (VEPGEPAKKKK).

This sequence belongs to the UPF0690 family. In terms of tissue distribution, expressed in all tissues tested including heart, placenta, liver, skeletal muscle, kidney and pancreas. Weak expression in brain and lung.

This chain is UPF0690 protein C1orf52 (C1orf52), found in Homo sapiens (Human).